We begin with the raw amino-acid sequence, 335 residues long: Succinylglutamate desuccinylase (335 aa).

His-59, Glu-62, and His-151 together coordinate Zn(2+). Glu-215 is a catalytic residue.

It belongs to the AspA/AstE family. Succinylglutamate desuccinylase subfamily. Zn(2+) is required as a cofactor.

The catalysed reaction is N-succinyl-L-glutamate + H2O = L-glutamate + succinate. Its pathway is amino-acid degradation; L-arginine degradation via AST pathway; L-glutamate and succinate from L-arginine: step 5/5. Functionally, transforms N(2)-succinylglutamate into succinate and glutamate. The protein is Succinylglutamate desuccinylase of Pseudomonas syringae pv. tomato (strain ATCC BAA-871 / DC3000).